A 100-amino-acid chain; its full sequence is Urease subunit gamma (100 aa).

This sequence belongs to the urease gamma subunit family. Heterotrimer of UreA (gamma), UreB (beta) and UreC (alpha) subunits. Three heterotrimers associate to form the active enzyme.

It localises to the cytoplasm. The catalysed reaction is urea + 2 H2O + H(+) = hydrogencarbonate + 2 NH4(+). The protein operates within nitrogen metabolism; urea degradation; CO(2) and NH(3) from urea (urease route): step 1/1. The protein is Urease subunit gamma of Prochlorococcus marinus (strain MIT 9313).